We begin with the raw amino-acid sequence, 59 residues long: Large ribosomal subunit protein eL29 (59 aa).

The span at 1-26 shows a compositional bias: basic residues; that stretch reads MAKSKNHTAHNQTRKAHRNGIKKPKT. The disordered stretch occupies residues 1–37; the sequence is MAKSKNHTAHNQTRKAHRNGIKKPKTYKYPSLKGVDP. Residue Lys-52 forms a Glycyl lysine isopeptide (Lys-Gly) (interchain with G-Cter in ubiquitin) linkage.

Belongs to the eukaryotic ribosomal protein eL29 family. As to quaternary structure, component of the large ribosomal subunit (LSU). Mature yeast ribosomes consist of a small (40S) and a large (60S) subunit. The 40S small subunit contains 1 molecule of ribosomal RNA (18S rRNA) and 33 different proteins (encoded by 57 genes). The large 60S subunit contains 3 rRNA molecules (25S, 5.8S and 5S rRNA) and 46 different proteins (encoded by 81 genes).

Its subcellular location is the cytoplasm. In terms of biological role, component of the ribosome, a large ribonucleoprotein complex responsible for the synthesis of proteins in the cell. The small ribosomal subunit (SSU) binds messenger RNAs (mRNAs) and translates the encoded message by selecting cognate aminoacyl-transfer RNA (tRNA) molecules. The large subunit (LSU) contains the ribosomal catalytic site termed the peptidyl transferase center (PTC), which catalyzes the formation of peptide bonds, thereby polymerizing the amino acids delivered by tRNAs into a polypeptide chain. The nascent polypeptides leave the ribosome through a tunnel in the LSU and interact with protein factors that function in enzymatic processing, targeting, and the membrane insertion of nascent chains at the exit of the ribosomal tunnel. This Saccharomyces cerevisiae (strain ATCC 204508 / S288c) (Baker's yeast) protein is Large ribosomal subunit protein eL29.